Reading from the N-terminus, the 447-residue chain is Phosphoglucosamine mutase (447 aa).

The active-site Phosphoserine intermediate is S102. Mg(2+) contacts are provided by S102, D241, D243, and D245. S102 bears the Phosphoserine mark.

It belongs to the phosphohexose mutase family. The cofactor is Mg(2+). In terms of processing, activated by phosphorylation.

It carries out the reaction alpha-D-glucosamine 1-phosphate = D-glucosamine 6-phosphate. Catalyzes the conversion of glucosamine-6-phosphate to glucosamine-1-phosphate. The protein is Phosphoglucosamine mutase of Pseudomonas savastanoi pv. phaseolicola (strain 1448A / Race 6) (Pseudomonas syringae pv. phaseolicola (strain 1448A / Race 6)).